Consider the following 474-residue polypeptide: ATP synthase subunit beta 2 (474 aa).

Residue 153–160 (GGAGVGKT) coordinates ATP.

It belongs to the ATPase alpha/beta chains family. As to quaternary structure, F-type ATPases have 2 components, CF(1) - the catalytic core - and CF(0) - the membrane proton channel. CF(1) has five subunits: alpha(3), beta(3), gamma(1), delta(1), epsilon(1). CF(0) has three main subunits: a(1), b(2) and c(9-12). The alpha and beta chains form an alternating ring which encloses part of the gamma chain. CF(1) is attached to CF(0) by a central stalk formed by the gamma and epsilon chains, while a peripheral stalk is formed by the delta and b chains.

The protein resides in the cell inner membrane. It carries out the reaction ATP + H2O + 4 H(+)(in) = ADP + phosphate + 5 H(+)(out). In terms of biological role, produces ATP from ADP in the presence of a proton gradient across the membrane. The catalytic sites are hosted primarily by the beta subunits. This is ATP synthase subunit beta 2 from Syntrophotalea carbinolica (strain DSM 2380 / NBRC 103641 / GraBd1) (Pelobacter carbinolicus).